Consider the following 247-residue polypeptide: ATP synthase subunit a, chloroplastic (247 aa).

5 consecutive transmembrane segments (helical) span residues Gln-38–Val-58, Val-95–Leu-115, Ile-134–Ser-154, Leu-199–Leu-219, and Gly-220–Gly-240.

The protein belongs to the ATPase A chain family. F-type ATPases have 2 components, CF(1) - the catalytic core - and CF(0) - the membrane proton channel. CF(1) has five subunits: alpha(3), beta(3), gamma(1), delta(1), epsilon(1). CF(0) has four main subunits: a, b, b' and c.

Its subcellular location is the plastid. The protein localises to the chloroplast thylakoid membrane. Key component of the proton channel; it plays a direct role in the translocation of protons across the membrane. The chain is ATP synthase subunit a, chloroplastic from Zea mays (Maize).